A 209-amino-acid chain; its full sequence is Flavin prenyltransferase UbiX (209 aa).

Residues 13–15 (GAS), serine 39, 104–107 (STGT), cysteine 116, and arginine 139 each bind FMN. Residues tyrosine 169 and arginine 185 each contribute to the dimethylallyl phosphate site.

Belongs to the UbiX/PAD1 family.

It carries out the reaction dimethylallyl phosphate + FMNH2 = prenylated FMNH2 + phosphate. Functionally, flavin prenyltransferase that catalyzes the synthesis of the prenylated FMN cofactor (prenyl-FMN) for 4-hydroxy-3-polyprenylbenzoic acid decarboxylase UbiD. The prenyltransferase is metal-independent and links a dimethylallyl moiety from dimethylallyl monophosphate (DMAP) to the flavin N5 and C6 atoms of FMN. This is Flavin prenyltransferase UbiX from Pseudomonas aeruginosa (strain ATCC 15692 / DSM 22644 / CIP 104116 / JCM 14847 / LMG 12228 / 1C / PRS 101 / PAO1).